The sequence spans 372 residues: 4-hydroxy-3-methylbut-2-en-1-yl diphosphate synthase (flavodoxin) (372 aa).

Cys-270, Cys-273, Cys-305, and Glu-312 together coordinate [4Fe-4S] cluster.

The protein belongs to the IspG family. [4Fe-4S] cluster serves as cofactor.

The enzyme catalyses (2E)-4-hydroxy-3-methylbut-2-enyl diphosphate + oxidized [flavodoxin] + H2O + 2 H(+) = 2-C-methyl-D-erythritol 2,4-cyclic diphosphate + reduced [flavodoxin]. It functions in the pathway isoprenoid biosynthesis; isopentenyl diphosphate biosynthesis via DXP pathway; isopentenyl diphosphate from 1-deoxy-D-xylulose 5-phosphate: step 5/6. Functionally, converts 2C-methyl-D-erythritol 2,4-cyclodiphosphate (ME-2,4cPP) into 1-hydroxy-2-methyl-2-(E)-butenyl 4-diphosphate. This Shigella boydii serotype 18 (strain CDC 3083-94 / BS512) protein is 4-hydroxy-3-methylbut-2-en-1-yl diphosphate synthase (flavodoxin).